The chain runs to 65 residues: Large ribosomal subunit protein uL29 (65 aa).

This sequence belongs to the universal ribosomal protein uL29 family.

This Buchnera aphidicola subsp. Acyrthosiphon pisum (strain 5A) protein is Large ribosomal subunit protein uL29.